We begin with the raw amino-acid sequence, 307 residues long: Aspartate carbamoyltransferase catalytic subunit (307 aa).

Positions 54 and 55 each coordinate carbamoyl phosphate. Lys-83 serves as a coordination point for L-aspartate. Carbamoyl phosphate is bound by residues Arg-104, His-132, and Gln-135. Residues Arg-165 and Arg-228 each coordinate L-aspartate. Residues Leu-267 and Pro-268 each contribute to the carbamoyl phosphate site.

Belongs to the aspartate/ornithine carbamoyltransferase superfamily. ATCase family. Heterododecamer (2C3:3R2) of six catalytic PyrB chains organized as two trimers (C3), and six regulatory PyrI chains organized as three dimers (R2).

It catalyses the reaction carbamoyl phosphate + L-aspartate = N-carbamoyl-L-aspartate + phosphate + H(+). The protein operates within pyrimidine metabolism; UMP biosynthesis via de novo pathway; (S)-dihydroorotate from bicarbonate: step 2/3. Functionally, catalyzes the condensation of carbamoyl phosphate and aspartate to form carbamoyl aspartate and inorganic phosphate, the committed step in the de novo pyrimidine nucleotide biosynthesis pathway. The sequence is that of Aspartate carbamoyltransferase catalytic subunit from Clostridium perfringens (strain SM101 / Type A).